The sequence spans 158 residues: UPF0758 protein VC_1786 (158 aa).

Positions 37–158 constitute an MPN domain; the sequence is TFARTENTTE…SVSFAERGWL (122 aa). Zn(2+) is bound by residues His108, His110, and Asp121. The JAMM motif signature appears at 108–121; sequence HNHPSGDPEPSQAD.

It belongs to the UPF0758 family.

This is UPF0758 protein VC_1786 from Vibrio cholerae serotype O1 (strain ATCC 39315 / El Tor Inaba N16961).